Consider the following 282-residue polypeptide: Bifunctional protein FolD (282 aa).

NADP(+) contacts are provided by residues 164 to 166 (GAS), Ile189, and Ile230.

The protein belongs to the tetrahydrofolate dehydrogenase/cyclohydrolase family. As to quaternary structure, homodimer.

The enzyme catalyses (6R)-5,10-methylene-5,6,7,8-tetrahydrofolate + NADP(+) = (6R)-5,10-methenyltetrahydrofolate + NADPH. It catalyses the reaction (6R)-5,10-methenyltetrahydrofolate + H2O = (6R)-10-formyltetrahydrofolate + H(+). It functions in the pathway one-carbon metabolism; tetrahydrofolate interconversion. Catalyzes the oxidation of 5,10-methylenetetrahydrofolate to 5,10-methenyltetrahydrofolate and then the hydrolysis of 5,10-methenyltetrahydrofolate to 10-formyltetrahydrofolate. This chain is Bifunctional protein FolD, found in Campylobacter jejuni subsp. doylei (strain ATCC BAA-1458 / RM4099 / 269.97).